A 212-amino-acid polypeptide reads, in one-letter code: Large ribosomal subunit protein bL25 (212 aa).

The segment covering Met-1 to Lys-16 has biased composition (basic and acidic residues). The tract at residues Met-1–Leu-22 is disordered.

The protein belongs to the bacterial ribosomal protein bL25 family. CTC subfamily. As to quaternary structure, part of the 50S ribosomal subunit; part of the 5S rRNA/L5/L18/L25 subcomplex. Contacts the 5S rRNA. Binds to the 5S rRNA independently of L5 and L18.

Its function is as follows. This is one of the proteins that binds to the 5S RNA in the ribosome where it forms part of the central protuberance. The sequence is that of Large ribosomal subunit protein bL25 from Bdellovibrio bacteriovorus (strain ATCC 15356 / DSM 50701 / NCIMB 9529 / HD100).